The primary structure comprises 172 residues: Myosin regulatory light chain 12B (172 aa).

The segment covering 1 to 16 (MSSKKAKTKTTKKRPQ) has biased composition (basic residues). Residues 1 to 20 (MSSKKAKTKTTKKRPQRATS) are disordered. Position 19 is a phosphothreonine; by MLCK and ZIPK/DAPK3 (Thr19). At Ser20 the chain carries Phosphoserine; by MLCK and ZIPK/DAPK3. EF-hand domains are found at residues 29–64 (SQIQ…LGKN), 98–133 (DPED…MGDR), and 134–169 (FTDE…GAKD). Asp42, Asn44, Asp46, and Asp53 together coordinate Ca(2+).

Myosin is a hexamer of 2 heavy chains and 4 light chains: interacts with myosin heavy chain MYO19. Phosphorylation increases the actin-activated myosin ATPase activity and thereby regulates the contractile activity. It is required to generate the driving force in the migration of the cells but not necessary for localization of myosin-2 at the leading edge. Phosphorylation is reduced following epigallocatechin-3-O-gallate treatment.

Its function is as follows. Myosin regulatory subunit that plays an important role in regulation of both smooth muscle and nonmuscle cell contractile activity via its phosphorylation. Phosphorylation triggers actin polymerization in vascular smooth muscle. Implicated in cytokinesis, receptor capping, and cell locomotion. The polypeptide is Myosin regulatory light chain 12B (Myl12b) (Rattus norvegicus (Rat)).